The primary structure comprises 124 residues: Large ribosomal subunit protein bL12 (124 aa).

Belongs to the bacterial ribosomal protein bL12 family. Homodimer. Part of the ribosomal stalk of the 50S ribosomal subunit. Forms a multimeric L10(L12)X complex, where L10 forms an elongated spine to which 2 to 4 L12 dimers bind in a sequential fashion. Binds GTP-bound translation factors.

Its function is as follows. Forms part of the ribosomal stalk which helps the ribosome interact with GTP-bound translation factors. Is thus essential for accurate translation. This chain is Large ribosomal subunit protein bL12, found in Borreliella afzelii (strain PKo) (Borrelia afzelii).